Consider the following 146-residue polypeptide: [Ribosomal protein bS18]-alanine N-acetyltransferase (146 aa).

Residues 2-146 form the N-acetyltransferase domain; the sequence is SIISQIEACD…ENAVVMACYL (145 aa). 69–71 lines the acetyl-CoA pocket; it reads IAI. The active-site Proton acceptor is the Glu103. Asn108 lines the acetyl-CoA pocket. Tyr114 (proton donor) is an active-site residue.

This sequence belongs to the acetyltransferase family. RimI subfamily.

It localises to the cytoplasm. The catalysed reaction is N-terminal L-alanyl-[ribosomal protein bS18] + acetyl-CoA = N-terminal N(alpha)-acetyl-L-alanyl-[ribosomal protein bS18] + CoA + H(+). Acetylates the N-terminal alanine of ribosomal protein bS18. The sequence is that of [Ribosomal protein bS18]-alanine N-acetyltransferase from Haemophilus influenzae (strain ATCC 51907 / DSM 11121 / KW20 / Rd).